The chain runs to 424 residues: Probable aminotransferase TAT4 (424 aa).

The protein belongs to the class-I pyridoxal-phosphate-dependent aminotransferase family. Requires pyridoxal 5'-phosphate as cofactor.

This chain is Probable aminotransferase TAT4, found in Arabidopsis thaliana (Mouse-ear cress).